Reading from the N-terminus, the 496-residue chain is ATP synthase subunit beta 1 (496 aa).

167 to 174 (GGAGVGKT) is a binding site for ATP. The segment at 474–496 (REAAAAQQSTAQQAAPAEKEPAA) is disordered. A compositionally biased stretch (low complexity) spans 476–489 (AAAAQQSTAQQAAP).

It belongs to the ATPase alpha/beta chains family. F-type ATPases have 2 components, CF(1) - the catalytic core - and CF(0) - the membrane proton channel. CF(1) has five subunits: alpha(3), beta(3), gamma(1), delta(1), epsilon(1). CF(0) has three main subunits: a(1), b(2) and c(9-12). The alpha and beta chains form an alternating ring which encloses part of the gamma chain. CF(1) is attached to CF(0) by a central stalk formed by the gamma and epsilon chains, while a peripheral stalk is formed by the delta and b chains.

It localises to the cell inner membrane. The enzyme catalyses ATP + H2O + 4 H(+)(in) = ADP + phosphate + 5 H(+)(out). In terms of biological role, produces ATP from ADP in the presence of a proton gradient across the membrane. The catalytic sites are hosted primarily by the beta subunits. In Paraburkholderia xenovorans (strain LB400), this protein is ATP synthase subunit beta 1.